Here is a 2193-residue protein sequence, read N- to C-terminus: Genome polyprotein (2193 aa).

G2 is lipidated: N-myristoyl glycine; by host. The Cytoplasmic segment spans residues 2 to 1503 (GAQVSTQKTG…HVSRAFICLQ (1502 aa)). An amphipathic alpha-helix region spans residues 565 to 582 (QLLQGDVEEAVNRAVARV). Residues H880 and D898 each act as for protease 2A activity in the active site. C915 and C917 together coordinate Zn(2+). Catalysis depends on C969, which acts as the For protease 2A activity. 2 residues coordinate Zn(2+): C975 and H977. The segment at 1109–1181 (SNGWLKKFTE…EQSAPSQSDQ (73 aa)) is membrane-binding. An oligomerization region spans residues 1109–1247 (SNGWLKKFTE…SPGAGKSVAT (139 aa)). The RNA-binding stretch occupies residues 1130-1134 (AIKIQ). An SF3 helicase domain is found at 1213–1369 (EKKMSNYIQF…SMYSQNGKIN (157 aa)). 3 residues coordinate Zn(2+): C1377, C1389, and C1394. Residues 1377 to 1394 (CDEECCPVNFKRCCPLVC) form a C4-type; degenerate zinc finger. Residues 1421-1428 (EYNHRHSV) are RNA-binding. The oligomerization stretch occupies residues 1432–1437 (LEALFQ). An intramembrane segment occupies 1504-1519 (ALTTFVSVAGIIYIIY). The Cytoplasmic portion of the chain corresponds to 1520 to 2193 (KLFAGFQGAY…TLRRKWLDSF (674 aa)). At Y1529 the chain carries O-(5'-phospho-RNA)-tyrosine. Residues 1549-1727 (GPAFEFAVAM…FSAALLRHYF (179 aa)) enclose the Peptidase C3 domain. Residues H1588, E1619, and C1695 each act as for protease 3C activity in the active site. The RdRp catalytic domain occupies 1958–2074 (GHLIAFDYSG…SYPWPIDASL (117 aa)). Mg(2+)-binding residues include D1964 and D2060.

The protein belongs to the picornaviruses polyprotein family. In terms of assembly, interacts with capsid protein VP1 and capsid protein VP3 to form heterotrimeric protomers. As to quaternary structure, interacts with capsid protein VP0, and capsid protein VP3 to form heterotrimeric protomers. Five protomers subsequently associate to form pentamers which serve as building blocks for the capsid. Interacts with capsid protein VP2, capsid protein VP3 and capsid protein VP4 following cleavage of capsid protein VP0. Interacts with capsid protein VP1 and capsid protein VP3 in the mature capsid. Interacts with host CD55; this interaction promotes virus attachment to the host cell and subsequent internalization. In terms of assembly, interacts with capsid protein VP0 and capsid protein VP1 to form heterotrimeric protomers. Five protomers subsequently associate to form pentamers which serve as building blocks for the capsid. Interacts with capsid protein VP4 in the mature capsid. Interacts with protein 2C; this interaction may be important for virion morphogenesis. Interacts with host CD55; this interaction promotes virus attachment to the host cell and subsequent internalization. As to quaternary structure, interacts with capsid protein VP1 and capsid protein VP3. Homodimer. In terms of assembly, homohexamer; forms a hexameric ring structure with 6-fold symmetry characteristic of AAA+ ATPases. Interacts (via N-terminus) with host RTN3 (via reticulon domain); this interaction is important for viral replication. Interacts with capsid protein VP3; this interaction may be important for virion morphogenesis. As to quaternary structure, interacts with protein 3CD. Homodimer. Interacts with host GBF1. Interacts (via GOLD domain) with host ACBD3 (via GOLD domain); this interaction allows the formation of a viral protein 3A/ACBD3 heterotetramer with a 2:2 stoichiometry, which will stimulate the recruitment of host PI4KB in order to synthesize PI4P at the viral RNA replication sites. In terms of assembly, interacts with RNA-directed RNA polymerase. As to quaternary structure, interacts with protein 3AB and with RNA-directed RNA polymerase. Interacts with Viral protein genome-linked and with protein 3CD. The cofactor is Mg(2+). In terms of processing, specific enzymatic cleavages in vivo by the viral proteases yield processing intermediates and the mature proteins. Myristoylation is required for the formation of pentamers during virus assembly. Further assembly of 12 pentamers and a molecule of genomic RNA generates the provirion. Post-translationally, during virion maturation, immature virions are rendered infectious following cleavage of VP0 into VP4 and VP2. This maturation seems to be an autocatalytic event triggered by the presence of RNA in the capsid and it is followed by a conformational change infectious virion. In terms of processing, myristoylation is required during RNA encapsidation and formation of the mature virus particle. VPg is uridylylated by the polymerase into VPg-pUpU. This acts as a nucleotide-peptide primer for the genomic RNA replication.

The protein localises to the virion. It localises to the host cytoplasm. Its subcellular location is the host cytoplasmic vesicle membrane. The protein resides in the host nucleus. It carries out the reaction a ribonucleoside 5'-triphosphate + H2O = a ribonucleoside 5'-diphosphate + phosphate + H(+). It catalyses the reaction Selective cleavage of Tyr-|-Gly bond in the picornavirus polyprotein.. The enzyme catalyses RNA(n) + a ribonucleoside 5'-triphosphate = RNA(n+1) + diphosphate. The catalysed reaction is Selective cleavage of Gln-|-Gly bond in the poliovirus polyprotein. In other picornavirus reactions Glu may be substituted for Gln, and Ser or Thr for Gly.. Its activity is regulated as follows. Replication or transcription is subject to high level of random mutations by the nucleotide analog ribavirin. Its function is as follows. Forms an icosahedral capsid of pseudo T=3 symmetry with capsid proteins VP2 and VP3. The capsid is 300 Angstroms in diameter, composed of 60 copies of each capsid protein and enclosing the viral positive strand RNA genome. Capsid protein VP1 mainly forms the vertices of the capsid. Capsid protein VP1 interacts with host cell receptor to provide virion attachment to target host cells. This attachment induces virion internalization. Tyrosine kinases are probably involved in the entry process. After binding to its receptor, the capsid undergoes conformational changes. Capsid protein VP1 N-terminus (that contains an amphipathic alpha-helix) and capsid protein VP4 are externalized. Together, they shape a pore in the host membrane through which viral genome is translocated to host cell cytoplasm. Functionally, forms an icosahedral capsid of pseudo T=3 symmetry with capsid proteins VP2 and VP3. The capsid is 300 Angstroms in diameter, composed of 60 copies of each capsid protein and enclosing the viral positive strand RNA genome. Lies on the inner surface of the capsid shell. After binding to the host receptor, the capsid undergoes conformational changes. Capsid protein VP4 is released, Capsid protein VP1 N-terminus is externalized, and together, they shape a pore in the host membrane through which the viral genome is translocated into the host cell cytoplasm. In terms of biological role, component of immature procapsids, which is cleaved into capsid proteins VP4 and VP2 after maturation. Allows the capsid to remain inactive before the maturation step. Its function is as follows. Cysteine protease that cleaves viral polyprotein and specific host proteins. It is responsible for the autocatalytic cleavage between the P1 and P2 regions, which is the first cleavage occurring in the polyprotein. Also cleaves the host translation initiation factor EIF4G1, in order to shut down the capped cellular mRNA translation. Inhibits the host nucleus-cytoplasm protein and RNA trafficking by cleaving host members of the nuclear pores. Counteracts stress granule formation probably by antagonizing its assembly or promoting its dissassembly. Functionally, plays an essential role in the virus replication cycle by acting as a viroporin. Creates a pore in the host endoplasmic reticulum and as a consequence releases Ca2+ in the cytoplasm of infected cell. In turn, high levels of cytoplasmic calcium may trigger membrane trafficking and transport of viral ER-associated proteins to viroplasms, sites of viral genome replication. Induces and associates with structural rearrangements of intracellular membranes. Displays RNA-binding, nucleotide binding and NTPase activities. May play a role in virion morphogenesis and viral RNA encapsidation by interacting with the capsid protein VP3. In terms of biological role, localizes the viral replication complex to the surface of membranous vesicles. Together with protein 3CD binds the Cis-Active RNA Element (CRE) which is involved in RNA synthesis initiation. Acts as a cofactor to stimulate the activity of 3D polymerase, maybe through a nucleid acid chaperone activity. Its function is as follows. Localizes the viral replication complex to the surface of membranous vesicles. It inhibits host cell endoplasmic reticulum-to-Golgi apparatus transport and causes the disassembly of the Golgi complex, possibly through GBF1 interaction. This would result in depletion of MHC, trail receptors and IFN receptors at the host cell surface. Plays an essential role in viral RNA replication by recruiting ACBD3 and PI4KB at the viral replication sites, thereby allowing the formation of the rearranged membranous structures where viral replication takes place. Functionally, acts as a primer for viral RNA replication and remains covalently bound to viral genomic RNA. VPg is uridylylated prior to priming replication into VPg-pUpU. The oriI viral genomic sequence may act as a template for this. The VPg-pUpU is then used as primer on the genomic RNA poly(A) by the RNA-dependent RNA polymerase to replicate the viral genome. During genome replication, the VPg-RNA linkage is removed by the host TDP2, thereby accelerating replication. During the late stage of the replication cycle, host TDP2 is excluded from sites of viral RNA synthesis and encapsidation, allowing for the generation of progeny virions. Involved in the viral replication complex and viral polypeptide maturation. It exhibits protease activity with a specificity and catalytic efficiency that is different from protease 3C. Protein 3CD lacks polymerase activity. Protein 3CD binds to the 5'UTR of the viral genome. In terms of biological role, replicates the viral genomic RNA on the surface of intracellular membranes. May form linear arrays of subunits that propagate along a strong head-to-tail interaction called interface-I. Covalently attaches UMP to a tyrosine of VPg, which is used to prime RNA synthesis. The positive stranded RNA genome is first replicated at virus induced membranous vesicles, creating a dsRNA genomic replication form. This dsRNA is then used as template to synthesize positive stranded RNA genomes. ss(+)RNA genomes are either translated, replicated or encapsidated. Its function is as follows. Major viral protease that mediates proteolytic processing of the polyprotein. Cleaves host EIF5B, contributing to host translation shutoff. Also cleaves host PABPC1, contributing to host translation shutoff. Cleaves host NLRP1, triggers host N-glycine-mediated degradation of the autoinhibitory NLRP1 N-terminal fragment. This Echovirus 12 (strain Travis) protein is Genome polyprotein.